The primary structure comprises 593 residues: Bifunctional lycopene cyclase/phytoene synthase (593 aa).

Positions 1 to 242 (MAYDYALVHL…IVFGMAVFDQ (242 aa)) are lycopene beta-cyclase. The next 7 membrane-spanning stretches (helical) occupy residues 8–28 (VHLKYTIPLAALLTVIAYPIF), 31–51 (IHFLQIGSLIVVSFLATLPWD), 77–97 (IEELFFFVIQTYITSLFYILL), 117–136 (IARGKVIGQGILVALTLYGV), 147–167 (YLGLILAWAFPFALLTFTVAG), 169–189 (FILTLPLTSTVVPIIIPTVYL), and 231–251 (ILIVFGMAVFDQYLAIIFAFP). Residues 249–593 (AFPHLFPKVP…KTVLKALFSA (345 aa)) are phytoene synthase.

The protein in the N-terminal section; belongs to the lycopene beta-cyclase family. In the C-terminal section; belongs to the phytoene/squalene synthase family.

The protein resides in the membrane. The enzyme catalyses all-trans-lycopene = gamma-carotene. It carries out the reaction gamma-carotene = all-trans-beta-carotene. It catalyses the reaction 2 (2E,6E,10E)-geranylgeranyl diphosphate = 15-cis-phytoene + 2 diphosphate. It functions in the pathway carotenoid biosynthesis; beta-carotene biosynthesis. It participates in carotenoid biosynthesis; phytoene biosynthesis; all-trans-phytoene from geranylgeranyl diphosphate: step 1/1. Functionally, bifunctional enzyme that catalyzes the reactions from geranylgeranyl diphosphate to phytoene (phytoene synthase) and lycopene to beta-carotene via the intermediate gamma-carotene (lycopene cyclase). The protein is Bifunctional lycopene cyclase/phytoene synthase of Podospora anserina (strain S / ATCC MYA-4624 / DSM 980 / FGSC 10383) (Pleurage anserina).